Consider the following 161-residue polypeptide: Putative sporulation sigma factor-processing peptidase (161 aa).

Aspartate 38 is an active-site residue.

It belongs to the peptidase U4 family.

Probably activates the RNA polymerase sigma-35 factor at the stage II of sporulation. In Bacillus thuringiensis subsp. kurstaki, this protein is Putative sporulation sigma factor-processing peptidase.